The sequence spans 96 residues: Small ribosomal subunit protein bS6 (96 aa).

The protein belongs to the bacterial ribosomal protein bS6 family.

Functionally, binds together with bS18 to 16S ribosomal RNA. The polypeptide is Small ribosomal subunit protein bS6 (Mycolicibacterium paratuberculosis (strain ATCC BAA-968 / K-10) (Mycobacterium paratuberculosis)).